A 182-amino-acid chain; its full sequence is Glutamyl-tRNA(Gln) amidotransferase subunit F, mitochondrial (182 aa).

This sequence belongs to the GatF family. Subunit of the heterotrimeric GatFAB amidotransferase (AdT) complex, composed of A, B and F subunits.

Its subcellular location is the mitochondrion inner membrane. The catalysed reaction is L-glutamyl-tRNA(Gln) + L-glutamine + ATP + H2O = L-glutaminyl-tRNA(Gln) + L-glutamate + ADP + phosphate + H(+). Functionally, allows the formation of correctly charged Gln-tRNA(Gln) through the transamidation of misacylated Glu-tRNA(Gln) in the mitochondria. The reaction takes place in the presence of glutamine and ATP through an activated gamma-phospho-Glu-tRNA(Gln). Required for proper protein synthesis within the mitochondrion. The protein is Glutamyl-tRNA(Gln) amidotransferase subunit F, mitochondrial of Candida tropicalis (strain ATCC MYA-3404 / T1) (Yeast).